Here is a 335-residue protein sequence, read N- to C-terminus: Histidinol-phosphatase (335 aa).

The protein belongs to the PHP hydrolase family. HisK subfamily.

The enzyme catalyses L-histidinol phosphate + H2O = L-histidinol + phosphate. It participates in amino-acid biosynthesis; L-histidine biosynthesis; L-histidine from 5-phospho-alpha-D-ribose 1-diphosphate: step 8/9. This chain is Histidinol-phosphatase (HIS2), found in Saccharomyces cerevisiae (strain ATCC 204508 / S288c) (Baker's yeast).